The following is a 171-amino-acid chain: Myosin regulatory light chain 12B (171 aa).

Threonine 18 carries the phosphothreonine; by MLCK and ZIPK/DAPK3 modification. The residue at position 19 (serine 19) is a Phosphoserine; by MLCK and ZIPK/DAPK3. EF-hand domains lie at 28–63 (SQIQEFKEAFNMIDQNRDGFIDKEDLHDMLASLGKN), 97–132 (DPEDVIRNAFACFDEEATGTIQEDYLRELLTTMGDR), and 133–168 (FTDEEVDELYREAPIDKKGNFNYIEFTRILKHGAKD). The Ca(2+) site is built by aspartate 41, asparagine 43, aspartate 45, and aspartate 52.

As to quaternary structure, myosin is a hexamer of 2 heavy chains and 4 light chains: interacts with myosin heavy chain MYO19. In terms of processing, phosphorylation increases the actin-activated myosin ATPase activity and thereby regulates the contractile activity. It is required to generate the driving force in the migration of the cells but not necessary for localization of myosin-2 at the leading edge. Phosphorylation is reduced following epigallocatechin-3-O-gallate treatment.

In terms of biological role, myosin regulatory subunit that plays an important role in regulation of both smooth muscle and nonmuscle cell contractile activity via its phosphorylation. Phosphorylation triggers actin polymerization in vascular smooth muscle. Implicated in cytokinesis, receptor capping, and cell locomotion. The polypeptide is Myosin regulatory light chain 12B (MYL12B) (Bos taurus (Bovine)).